The sequence spans 152 residues: Superoxide dismutase [Cu-Zn] 2 (152 aa).

Positions 45, 47, and 62 each coordinate Cu cation. Cys-56 and Cys-145 are disulfide-bonded. Positions 62, 70, 79, and 82 each coordinate Zn(2+). His-119 is a binding site for Cu cation.

It belongs to the Cu-Zn superoxide dismutase family. In terms of assembly, homodimer. The cofactor is Cu cation. Zn(2+) is required as a cofactor.

The protein resides in the cytoplasm. The enzyme catalyses 2 superoxide + 2 H(+) = H2O2 + O2. Destroys radicals which are normally produced within the cells and which are toxic to biological systems. In Solanum lycopersicum (Tomato), this protein is Superoxide dismutase [Cu-Zn] 2 (SODCC.5).